Here is a 512-residue protein sequence, read N- to C-terminus: 2,3-bisphosphoglycerate-independent phosphoglycerate mutase (512 aa).

Residues aspartate 12 and serine 62 each contribute to the Mn(2+) site. Catalysis depends on serine 62, which acts as the Phosphoserine intermediate. Residues histidine 123, 153-154, arginine 185, arginine 191, 260-263, and lysine 333 each bind substrate; these read RD and RPDR. Positions 400, 404, 441, 442, and 460 each coordinate Mn(2+).

Belongs to the BPG-independent phosphoglycerate mutase family. Monomer. The cofactor is Mn(2+).

The enzyme catalyses (2R)-2-phosphoglycerate = (2R)-3-phosphoglycerate. The protein operates within carbohydrate degradation; glycolysis; pyruvate from D-glyceraldehyde 3-phosphate: step 3/5. Catalyzes the interconversion of 2-phosphoglycerate and 3-phosphoglycerate. This is 2,3-bisphosphoglycerate-independent phosphoglycerate mutase from Clostridium perfringens (strain SM101 / Type A).